Reading from the N-terminus, the 181-residue chain is Ferritin BfrB (181 aa).

Residues Met15 to Gly150 form the Ferritin-like diiron domain. The Fe cation site is built by Glu22, Glu55, His58, Glu99, and Gln132.

It belongs to the ferritin family. Prokaryotic subfamily. In terms of assembly, homooligomer of 24 subunits that are packed together to form an approximately spherical molecule with a central cavity, in which large amounts of iron can be stored.

It catalyses the reaction 4 Fe(2+) + O2 + 4 H(+) = 4 Fe(3+) + 2 H2O. Functionally, iron-storage protein that displays ferroxidase activity, catalyzing the oxidation of Fe(2+) ions into Fe(3+) ions, that can then be deposited as a ferric-oxide mineral core within the central cavity of the protein complex. This Mycobacterium tuberculosis (strain ATCC 35801 / TMC 107 / Erdman) protein is Ferritin BfrB (bfrB).